The sequence spans 246 residues: Ubiquinone biosynthesis O-methyltransferase (246 aa).

Residues R44, G63, D84, and M128 each coordinate S-adenosyl-L-methionine.

This sequence belongs to the methyltransferase superfamily. UbiG/COQ3 family.

It carries out the reaction a 3-demethylubiquinol + S-adenosyl-L-methionine = a ubiquinol + S-adenosyl-L-homocysteine + H(+). It catalyses the reaction a 3-(all-trans-polyprenyl)benzene-1,2-diol + S-adenosyl-L-methionine = a 2-methoxy-6-(all-trans-polyprenyl)phenol + S-adenosyl-L-homocysteine + H(+). It functions in the pathway cofactor biosynthesis; ubiquinone biosynthesis. Its function is as follows. O-methyltransferase that catalyzes the 2 O-methylation steps in the ubiquinone biosynthetic pathway. This Xylella fastidiosa (strain 9a5c) protein is Ubiquinone biosynthesis O-methyltransferase.